A 689-amino-acid chain; its full sequence is Glycine--tRNA ligase beta subunit (689 aa).

It belongs to the class-II aminoacyl-tRNA synthetase family. Tetramer of two alpha and two beta subunits.

It is found in the cytoplasm. The catalysed reaction is tRNA(Gly) + glycine + ATP = glycyl-tRNA(Gly) + AMP + diphosphate. The protein is Glycine--tRNA ligase beta subunit of Shewanella baltica (strain OS223).